Reading from the N-terminus, the 526-residue chain is Histidine ammonia-lyase (526 aa).

Positions A143–G145 form a cross-link, 5-imidazolinone (Ala-Gly). 2,3-didehydroalanine (Ser) is present on S144.

It belongs to the PAL/histidase family. Contains an active site 4-methylidene-imidazol-5-one (MIO), which is formed autocatalytically by cyclization and dehydration of residues Ala-Ser-Gly.

The protein resides in the cytoplasm. It carries out the reaction L-histidine = trans-urocanate + NH4(+). It functions in the pathway amino-acid degradation; L-histidine degradation into L-glutamate; N-formimidoyl-L-glutamate from L-histidine: step 1/3. This Aromatoleum aromaticum (strain DSM 19018 / LMG 30748 / EbN1) (Azoarcus sp. (strain EbN1)) protein is Histidine ammonia-lyase.